A 668-amino-acid polypeptide reads, in one-letter code: Spindle assembly abnormal protein 6 homolog (668 aa).

The PISA domain occupies 39–91 (VHKKELVVRLSDDTDPFFLYNLTLGEEDFQSLKNQQGLLVEFSAFPQRFIDLL). Residues 182 to 482 (LGVTQQALAE…NVIAWLNKQL (301 aa)) are a coiled coil. The segment at 623 to 668 (GSVPVKGQRNGSSAGTVPVRPALPKSGSSPILSAYFPGQQSRLPAS) is disordered.

Nine homodimers form a cartwheel structure with an internal diameter of 23 nM and radial spokes connecting to the microtubule triplets.

The protein resides in the cytoplasm. The protein localises to the cytoskeleton. It localises to the microtubule organizing center. Its subcellular location is the centrosome. Central scaffolding component of the centrioles ensuring their 9-fold symmetry. Required for centrosome biogenesis and duplication: required both for mother-centriole-dependent centriole duplication and deuterosome-dependent centriole amplification in multiciliated cells. The polypeptide is Spindle assembly abnormal protein 6 homolog (sas6) (Xenopus laevis (African clawed frog)).